Reading from the N-terminus, the 120-residue chain is Small ribosomal subunit protein bS16 (120 aa).

Basic and acidic residues predominate over residues 84–110 (KREVKSNPEKAKPGKRAQERAAEKAQK). Residues 84–120 (KREVKSNPEKAKPGKRAQERAAEKAQKAADAAAATAE) form a disordered region. Over residues 111–120 (AADAAAATAE) the composition is skewed to low complexity.

Belongs to the bacterial ribosomal protein bS16 family.

The chain is Small ribosomal subunit protein bS16 from Rhizobium rhizogenes (strain K84 / ATCC BAA-868) (Agrobacterium radiobacter).